The chain runs to 159 residues: MNIIPTCQVPKDLVSAFFQKHWGSPQMVISSGIYNCDELDGYGMLNDDNQIVGLITYIFEEDACEIISLDSVIENKGIGTALLEKAEEACRERNIKQIKLITTNDNIHALAFYQKRGYRLDRLFVNAVETARKMKPEIPLLADNKIPIRDELLLVKELQ.

One can recognise an N-acetyltransferase domain in the interval 1–139; sequence MNIIPTCQVP…TARKMKPEIP (139 aa).

This is an uncharacterized protein from Bacillus subtilis (strain 168).